Consider the following 555-residue polypeptide: CTP synthase (555 aa).

Residues 1–272 (MQPTSTTTKH…DAYVVRKLDL (272 aa)) are amidoligase domain. A CTP-binding site is contributed by serine 19. Residue serine 19 participates in UTP binding. Residues 20-25 (SLGKGL) and aspartate 77 each bind ATP. Aspartate 77 and glutamate 146 together coordinate Mg(2+). CTP contacts are provided by residues 153–155 (DIE), 193–198 (KTKPTQ), and lysine 229. Residues 193–198 (KTKPTQ) and lysine 229 contribute to the UTP site. One can recognise a Glutamine amidotransferase type-1 domain in the interval 297–548 (TVALVGKYID…VKAAVARQVA (252 aa)). Residue glycine 360 coordinates L-glutamine. The Nucleophile; for glutamine hydrolysis role is filled by cysteine 387. L-glutamine contacts are provided by residues 388–391 (LGLQ), glutamate 411, and arginine 473. Active-site residues include histidine 521 and glutamate 523.

Belongs to the CTP synthase family. In terms of assembly, homotetramer.

The enzyme catalyses UTP + L-glutamine + ATP + H2O = CTP + L-glutamate + ADP + phosphate + 2 H(+). The catalysed reaction is L-glutamine + H2O = L-glutamate + NH4(+). It carries out the reaction UTP + NH4(+) + ATP = CTP + ADP + phosphate + 2 H(+). The protein operates within pyrimidine metabolism; CTP biosynthesis via de novo pathway; CTP from UDP: step 2/2. Allosterically activated by GTP, when glutamine is the substrate; GTP has no effect on the reaction when ammonia is the substrate. The allosteric effector GTP functions by stabilizing the protein conformation that binds the tetrahedral intermediate(s) formed during glutamine hydrolysis. Inhibited by the product CTP, via allosteric rather than competitive inhibition. In terms of biological role, catalyzes the ATP-dependent amination of UTP to CTP with either L-glutamine or ammonia as the source of nitrogen. Regulates intracellular CTP levels through interactions with the four ribonucleotide triphosphates. The chain is CTP synthase from Streptomyces griseus subsp. griseus (strain JCM 4626 / CBS 651.72 / NBRC 13350 / KCC S-0626 / ISP 5235).